We begin with the raw amino-acid sequence, 287 residues long: ATP synthase gamma chain (287 aa).

The protein belongs to the ATPase gamma chain family. F-type ATPases have 2 components, CF(1) - the catalytic core - and CF(0) - the membrane proton channel. CF(1) has five subunits: alpha(3), beta(3), gamma(1), delta(1), epsilon(1). CF(0) has three main subunits: a, b and c.

The protein resides in the cell membrane. Functionally, produces ATP from ADP in the presence of a proton gradient across the membrane. The gamma chain is believed to be important in regulating ATPase activity and the flow of protons through the CF(0) complex. The polypeptide is ATP synthase gamma chain (Mycoplasmopsis agalactiae (strain NCTC 10123 / CIP 59.7 / PG2) (Mycoplasma agalactiae)).